The primary structure comprises 610 residues: UvrABC system protein C (610 aa).

Residues 13 to 91 enclose the GIY-YIG domain; the sequence is HLPGVYRMYD…IKENQPKYNV (79 aa). In terms of domain architecture, UVR spans 201-236; sequence GQVIEHLVQKMENAAQELDFEAAARFRDQIQSVRAV.

This sequence belongs to the UvrC family. In terms of assembly, interacts with UvrB in an incision complex.

It localises to the cytoplasm. Its function is as follows. The UvrABC repair system catalyzes the recognition and processing of DNA lesions. UvrC both incises the 5' and 3' sides of the lesion. The N-terminal half is responsible for the 3' incision and the C-terminal half is responsible for the 5' incision. In Actinobacillus pleuropneumoniae serotype 3 (strain JL03), this protein is UvrABC system protein C.